Here is a 476-residue protein sequence, read N- to C-terminus: Protein transport protein Sec61 subunit alpha isoform B (476 aa).

At 2–33 (GIKFLEVIKPFCAVLPEIQKPERKIQFREKVL) the chain is on the cytoplasmic side. Residues 34 to 53 (WTAITLFIFLVCCQIPLFGI) form a helical membrane-spanning segment. Residues 54–76 (MSSDSADPFYWMRVILASNRGTL) are Lumenal-facing. The chain crosses the membrane as a helical span at residues 77-96 (MELGISPIVTSGLIMQLLAG). Residues 97-117 (AKIIEVGDTPKDRALFNGAQK) lie on the Cytoplasmic side of the membrane. Residues 118-138 (LFGMIITIGQAIVYVMTGMYG) traverse the membrane as a helical segment. At 139–144 (DPSDMG) the chain is on the lumenal side. The helical transmembrane segment at 145–165 (AGICLLIIIQLFVAGLIVLLL) threads the bilayer. Residues 166 to 172 (DELLQKG) lie on the Cytoplasmic side of the membrane. A helical transmembrane segment spans residues 173–193 (YGLGSGISLFIATNICETIVW). The Lumenal portion of the chain corresponds to 194 to 240 (KAFSPTTVNTGRGTEFEGAIIALFHLLATRTDKVRALREAFYRQNLP). Residues 241–261 (NLMNLLATVFVFGVVIYFQGF) traverse the membrane as a helical segment. At 262 to 288 (RVDLPIKSARYRGQYNTYPIKLFYTSN) the chain is on the cytoplasmic side. A helical membrane pass occupies residues 289–309 (IPIILQSALVSNLYVISQMLS). Topologically, residues 310-354 (TRFSGNFLVNLLGTWSDTSSGGPARAYPVGGLCYYFSPPESFGSV) are lumenal. The chain crosses the membrane as a helical span at residues 355 to 375 (LDDPIHAAIYICFMLGSCAFF). Residues 376 to 420 (SKTWIEVSGSSAKDVAKQLKEQQMVMRGHRETSMVHELNRYIPTA) lie on the Cytoplasmic side of the membrane. A helical membrane pass occupies residues 421–441 (AAFGGLCIGGLSVMADFLGAI). Residues 442 to 445 (GSGT) are Lumenal-facing. The helical transmembrane segment at 446-462 (GILLAVTIIYQYFEIFV) threads the bilayer. Residues 463 to 476 (KEQSEMGSMGALLF) lie on the Cytoplasmic side of the membrane.

The protein belongs to the SecY/SEC61-alpha family. As to quaternary structure, the SEC61 channel-forming translocon complex consists of channel-forming core components SEC61A1, SEC61B and SEC61G and different auxiliary components such as SEC62 and SEC63.

Its subcellular location is the endoplasmic reticulum membrane. In terms of biological role, component of SEC61 channel-forming translocon complex that mediates transport of signal peptide-containing precursor polypeptides across the endoplasmic reticulum (ER). Forms a ribosome receptor and a gated pore in the ER membrane, both functions required for cotranslational translocation of nascent polypeptides. The sequence is that of Protein transport protein Sec61 subunit alpha isoform B (sec61ab) from Oncorhynchus mykiss (Rainbow trout).